The primary structure comprises 148 residues: Lysozyme C (148 aa).

The signal sequence occupies residues 1-18 (MKALLLLGLLLLSVTVQG). The 130-residue stretch at 19–148 (KIFERCDLAR…VSQYVRNCGV (130 aa)) folds into the C-type lysozyme domain. 4 disulfides stabilise this stretch: cysteine 24-cysteine 146, cysteine 48-cysteine 134, cysteine 83-cysteine 99, and cysteine 95-cysteine 113. Active-site residues include glutamate 53 and aspartate 71.

The protein belongs to the glycosyl hydrolase 22 family. Monomer.

The enzyme catalyses Hydrolysis of (1-&gt;4)-beta-linkages between N-acetylmuramic acid and N-acetyl-D-glucosamine residues in a peptidoglycan and between N-acetyl-D-glucosamine residues in chitodextrins.. Lysozymes have primarily a bacteriolytic function; those in tissues and body fluids are associated with the monocyte-macrophage system and enhance the activity of immunoagents. In Halichoerus grypus (Gray seal), this protein is Lysozyme C (LYZ).